The sequence spans 145 residues: D-aminoacyl-tRNA deacylase (145 aa).

The Gly-cisPro motif, important for rejection of L-amino acids motif lies at Gly-137–Pro-138.

It belongs to the DTD family. In terms of assembly, homodimer.

It localises to the cytoplasm. The enzyme catalyses glycyl-tRNA(Ala) + H2O = tRNA(Ala) + glycine + H(+). It carries out the reaction a D-aminoacyl-tRNA + H2O = a tRNA + a D-alpha-amino acid + H(+). In terms of biological role, an aminoacyl-tRNA editing enzyme that deacylates mischarged D-aminoacyl-tRNAs. Also deacylates mischarged glycyl-tRNA(Ala), protecting cells against glycine mischarging by AlaRS. Acts via tRNA-based rather than protein-based catalysis; rejects L-amino acids rather than detecting D-amino acids in the active site. By recycling D-aminoacyl-tRNA to D-amino acids and free tRNA molecules, this enzyme counteracts the toxicity associated with the formation of D-aminoacyl-tRNA entities in vivo and helps enforce protein L-homochirality. The sequence is that of D-aminoacyl-tRNA deacylase from Francisella tularensis subsp. holarctica (strain LVS).